The following is a 182-amino-acid chain: MMAFWKIFFKHHNIFSSNLNNQLVNQDAADKILLVKYLEGRGTIVNVYLSFNSYVNLHDLEKLCDSVGWVRRPLKKVKIAIDNSFVTASLFYEQNKKKFLIGFARATSDTSFNATIWDVVIHPDFQGQGLGKMLMAQIIKQLRYEDINTITLFADPQVVNFYKHLGFITDPDGVKGMFWYPL.

The region spanning 55 to 182 (VNLHDLEKLC…GVKGMFWYPL (128 aa)) is the N-acetyltransferase domain.

Belongs to the acetyltransferase family. Ycf52 subfamily.

The protein localises to the plastid. The protein resides in the chloroplast. This is an uncharacterized protein from Gracilaria tenuistipitata var. liui (Red alga).